The following is a 186-amino-acid chain: dCTP deaminase (186 aa).

A dCTP-binding site is contributed by 107-112; it reads KSSYAR. The active-site Proton donor/acceptor is E133. DCTP contacts are provided by Q152, Y166, and Q176.

It belongs to the dCTP deaminase family. Homotrimer.

It carries out the reaction dCTP + H2O + H(+) = dUTP + NH4(+). The protein operates within pyrimidine metabolism; dUMP biosynthesis; dUMP from dCTP (dUTP route): step 1/2. Catalyzes the deamination of dCTP to dUTP. The polypeptide is dCTP deaminase (Chloroflexus aggregans (strain MD-66 / DSM 9485)).